Reading from the N-terminus, the 185-residue chain is Prorelaxin H1 (185 aa).

The N-terminal stretch at 1-22 (MPRLFLFHLLEFCLLLNQFSRA) is a signal peptide. 3 disulfides stabilise this stretch: C35-C172, C47-C185, and C171-C176. Residues 56-158 (SLSQEDAPQT…KYLGLDTHSQ (103 aa)) constitute a propeptide, connecting peptide.

This sequence belongs to the insulin family. Heterodimer of a B chain and an A chain linked by two disulfide bonds. In terms of tissue distribution, prostate. Not expressed in placenta, decidua or ovary.

Its subcellular location is the secreted. Relaxin is an ovarian hormone that acts with estrogen to produce dilatation of the birth canal in many mammals. May be involved in remodeling of connective tissues during pregnancy, promoting growth of pubic ligaments and ripening of the cervix. The chain is Prorelaxin H1 (RLN1) from Homo sapiens (Human).